The primary structure comprises 188 residues: Elongation factor P (188 aa).

It belongs to the elongation factor P family.

It is found in the cytoplasm. The protein operates within protein biosynthesis; polypeptide chain elongation. Involved in peptide bond synthesis. Stimulates efficient translation and peptide-bond synthesis on native or reconstituted 70S ribosomes in vitro. Probably functions indirectly by altering the affinity of the ribosome for aminoacyl-tRNA, thus increasing their reactivity as acceptors for peptidyl transferase. The chain is Elongation factor P from Bradyrhizobium diazoefficiens (strain JCM 10833 / BCRC 13528 / IAM 13628 / NBRC 14792 / USDA 110).